A 90-amino-acid polypeptide reads, in one-letter code: Putative UPF0401 protein YpjI (90 aa).

Belongs to the UPF0401 family.

In Escherichia coli (strain K12), this protein is Putative UPF0401 protein YpjI (ypjI).